A 465-amino-acid chain; its full sequence is Hexokinase-4 (465 aa).

The 445-residue stretch at 10-454 (AAKKEKVEQI…SGRGAALVSA (445 aa)) folds into the Hexokinase domain. The hexokinase small subdomain stretch occupies residues 67 to 203 (EGSEVGDFLS…DFEMDVVAMV (137 aa)). Position 78–83 (78–83 (DLGGTN)) interacts with ATP. Substrate contacts are provided by residues 151–152 (SF), 168–169 (TK), and 204–205 (ND). The tract at residues 204 to 443 (NDTVATMISC…CEITFIESEE (240 aa)) is hexokinase large subdomain. T228 is a binding site for ATP. Substrate is bound by residues N231, E256, and E290. Residues 295–296 (GK), 332–336 (TRFVS), and 411–415 (SVYKL) contribute to the ATP site.

This sequence belongs to the hexokinase family. Monomer. Interacts with MIDN; the interaction occurs preferentially at low glucose levels and results in inhibition of hexokinase activity. Interacts with GCKR; leading to sequestration in the nucleus.

Its subcellular location is the cytoplasm. It is found in the nucleus. It localises to the mitochondrion. It catalyses the reaction a D-hexose + ATP = a D-hexose 6-phosphate + ADP + H(+). It carries out the reaction D-fructose + ATP = D-fructose 6-phosphate + ADP + H(+). The enzyme catalyses D-glucose + ATP = D-glucose 6-phosphate + ADP + H(+). The catalysed reaction is D-mannose + ATP = D-mannose 6-phosphate + ADP + H(+). It participates in carbohydrate metabolism; hexose metabolism. It functions in the pathway carbohydrate degradation; glycolysis; D-glyceraldehyde 3-phosphate and glycerone phosphate from D-glucose: step 1/4. With respect to regulation, subject to allosteric regulation. Low glucose and high fructose-6-phosphate triggers association with the inhibitor GCKR followed by sequestration in the nucleus. Functionally, catalyzes the phosphorylation of hexose, such as D-glucose, D-fructose and D-mannose, to hexose 6-phosphate (D-glucose 6-phosphate, D-fructose 6-phosphate and D-mannose 6-phosphate, respectively). Compared to other hexokinases, has a weak affinity for D-glucose, and is effective only when glucose is abundant. Mainly expressed in pancreatic beta cells and the liver and constitutes a rate-limiting step in glucose metabolism in these tissues. Since insulin secretion parallels glucose metabolism and the low glucose affinity of GCK ensures that it can change its enzymatic activity within the physiological range of glucose concentrations, GCK acts as a glucose sensor in the pancreatic beta cell. In pancreas, plays an important role in modulating insulin secretion. In liver, helps to facilitate the uptake and conversion of glucose by acting as an insulin-sensitive determinant of hepatic glucose usage. Required to provide D-glucose 6-phosphate for the synthesis of glycogen. Mediates the initial step of glycolysis by catalyzing phosphorylation of D-glucose to D-glucose 6-phosphate. This is Hexokinase-4 from Homo sapiens (Human).